The sequence spans 207 residues: Ribosomal RNA small subunit methyltransferase G (207 aa).

S-adenosyl-L-methionine contacts are provided by residues Gly75, Phe80, 126 to 127 (LE), and Arg140.

This sequence belongs to the methyltransferase superfamily. RNA methyltransferase RsmG family.

The protein resides in the cytoplasm. The enzyme catalyses guanosine(527) in 16S rRNA + S-adenosyl-L-methionine = N(7)-methylguanosine(527) in 16S rRNA + S-adenosyl-L-homocysteine. Specifically methylates the N7 position of guanine in position 527 of 16S rRNA. The sequence is that of Ribosomal RNA small subunit methyltransferase G from Erythrobacter litoralis (strain HTCC2594).